The sequence spans 486 residues: Cysteine--tRNA ligase (486 aa).

Residue Cys29 coordinates Zn(2+). The short motif at 31–41 (VTVYDYCHLGH) is the 'HIGH' region element. Residues Cys217, His242, and Glu246 each coordinate Zn(2+). A 'KMSKS' region motif is present at residues 274 to 278 (KMSKS). Lys277 is an ATP binding site.

The protein belongs to the class-I aminoacyl-tRNA synthetase family. In terms of assembly, monomer. Requires Zn(2+) as cofactor.

It is found in the cytoplasm. It carries out the reaction tRNA(Cys) + L-cysteine + ATP = L-cysteinyl-tRNA(Cys) + AMP + diphosphate. This chain is Cysteine--tRNA ligase, found in Thermosynechococcus vestitus (strain NIES-2133 / IAM M-273 / BP-1).